A 436-amino-acid polypeptide reads, in one-letter code: MQVTVEKPETGLEHKINVTLPAGDLDSKVEQRLAQMRRTVKMDGFRPGKVPMSVVKKRYGGQVRQEMMGETVQQSFYDAVAKESLNIAGYPQFQELDEKDGHIVYSATFEVFPEVELPKFSSLKVETVTSEVTDKDVEKMVTRLREQKMAWKPANGNKKAKEGDQVIIDFVGKKDGEEFEGGKAEEVPLELGSGRMIPGFEDGIIGMKKNEEKTIEVTFPEDYQSDELKGQTVTFDITVHSVQTKVLPEIDEEFVKSFGIEEGTEEALVNEIRSNMEKELKRSVENKNRTAVLDALAEKVEVELPQAMVDQEASALMERQLEQFQQQGLKAEDIGLTAEAFKPEAEKRVKIGLVLGEVIKEYKIEATDEARQAFIQDQASSYEDPQEVIEWYAKNPQAQKEIDAILVEKEITNKILSEAKTKEVSKSFEEIVSPAA.

Residues 163 to 248 (GDQVIIDFVG…VHSVQTKVLP (86 aa)) enclose the PPIase FKBP-type domain.

It belongs to the FKBP-type PPIase family. Tig subfamily.

It is found in the cytoplasm. The enzyme catalyses [protein]-peptidylproline (omega=180) = [protein]-peptidylproline (omega=0). In terms of biological role, involved in protein export. Acts as a chaperone by maintaining the newly synthesized protein in an open conformation. Functions as a peptidyl-prolyl cis-trans isomerase. This chain is Trigger factor, found in Hydrogenovibrio crunogenus (strain DSM 25203 / XCL-2) (Thiomicrospira crunogena).